We begin with the raw amino-acid sequence, 375 residues long: ATP phosphoribosyltransferase regulatory subunit (375 aa).

This sequence belongs to the class-II aminoacyl-tRNA synthetase family. HisZ subfamily. In terms of assembly, heteromultimer composed of HisG and HisZ subunits.

It localises to the cytoplasm. The protein operates within amino-acid biosynthesis; L-histidine biosynthesis; L-histidine from 5-phospho-alpha-D-ribose 1-diphosphate: step 1/9. Functionally, required for the first step of histidine biosynthesis. May allow the feedback regulation of ATP phosphoribosyltransferase activity by histidine. This is ATP phosphoribosyltransferase regulatory subunit from Agrobacterium fabrum (strain C58 / ATCC 33970) (Agrobacterium tumefaciens (strain C58)).